Reading from the N-terminus, the 775-residue chain is 5-methyltetrahydropteroyltriglutamate--homocysteine methyltransferase (775 aa).

5-methyltetrahydropteroyltri-L-glutamate is bound by residues 15-18 (RELK) and Lys-118. L-homocysteine is bound by residues 448 to 450 (IGS) and Glu-501. Residues 448–450 (IGS) and Glu-501 contribute to the L-methionine site. Residues 532-533 (RC) and Trp-578 contribute to the 5-methyltetrahydropteroyltri-L-glutamate site. Position 616 (Asp-616) interacts with L-homocysteine. Asp-616 contributes to the L-methionine binding site. Residue Glu-622 participates in 5-methyltetrahydropteroyltri-L-glutamate binding. Zn(2+) is bound by residues His-658, Cys-660, and Glu-682. The active-site Proton donor is His-711. Cys-743 contacts Zn(2+).

The protein belongs to the vitamin-B12 independent methionine synthase family. Zn(2+) serves as cofactor.

It catalyses the reaction 5-methyltetrahydropteroyltri-L-glutamate + L-homocysteine = tetrahydropteroyltri-L-glutamate + L-methionine. Its pathway is amino-acid biosynthesis; L-methionine biosynthesis via de novo pathway; L-methionine from L-homocysteine (MetE route): step 1/1. Catalyzes the transfer of a methyl group from 5-methyltetrahydrofolate to homocysteine resulting in methionine formation. This is 5-methyltetrahydropteroyltriglutamate--homocysteine methyltransferase from Cytophaga hutchinsonii (strain ATCC 33406 / DSM 1761 / CIP 103989 / NBRC 15051 / NCIMB 9469 / D465).